A 223-amino-acid chain; its full sequence is Glycoprotein 42 (223 aa).

The Intravirion segment spans residues 1-8; the sequence is MVSFKQVR. Residues 9-29 form a helical membrane-spanning segment; the sequence is VPLFTAIALVIVLLLAYFLPP. The Virion surface portion of the chain corresponds to 30–223; the sequence is RVRGGGRVAA…CLCVSQRSNS (194 aa). 5 cysteine pairs are disulfide-bonded: C99–C138, C102–C115, C128–C214, C132–C216, and C192–C208. Residues 111–217 form the C-type lectin domain; sequence YKGCCFYFTK…CSFLKPCLCV (107 aa).

Belongs to the epstein barr virus gp42 family. As to quaternary structure, forms a complex with gp25 and gp85 via its N-terminus; this complex is used for invasion of B-lymphocytes. Interacts with human HLA-DRA and HLA-DRB1.

The protein localises to the virion membrane. It is found in the host membrane. Its function is as follows. Plays a role in virion attachment to host B-lymphocytes, through binding to leukocyte antigen (HLA) class II and subsequently participates in fusion of the virion with host membranes. May act as a tropism switch that directs fusion with B-lymphocytes and inhibits fusion with epithelial cells. Additionally, hampers T-cell recognition via HLA class II molecules through steric hindrance of T-cell receptor-class II-peptide interaction. In terms of biological role, soluble gp42 inhibits HLA class II-restricted antigen presentation to T-cells through binding to immature and mature HLA class II complexes. In Epstein-Barr virus (strain B95-8) (HHV-4), this protein is Glycoprotein 42.